The following is a 189-amino-acid chain: Potassium-transporting ATPase KdpC subunit (189 aa).

A helical transmembrane segment spans residues 11–31; sequence LFVLLTVITGVLYPVFVTGLA.

Belongs to the KdpC family. The system is composed of three essential subunits: KdpA, KdpB and KdpC.

It is found in the cell inner membrane. Functionally, part of the high-affinity ATP-driven potassium transport (or Kdp) system, which catalyzes the hydrolysis of ATP coupled with the electrogenic transport of potassium into the cytoplasm. This subunit acts as a catalytic chaperone that increases the ATP-binding affinity of the ATP-hydrolyzing subunit KdpB by the formation of a transient KdpB/KdpC/ATP ternary complex. In Polynucleobacter asymbioticus (strain DSM 18221 / CIP 109841 / QLW-P1DMWA-1) (Polynucleobacter necessarius subsp. asymbioticus), this protein is Potassium-transporting ATPase KdpC subunit.